Consider the following 158-residue polypeptide: NAD(P)H-quinone oxidoreductase subunit J, chloroplastic (158 aa).

It belongs to the complex I 30 kDa subunit family. As to quaternary structure, NDH is composed of at least 16 different subunits, 5 of which are encoded in the nucleus.

It localises to the plastid. Its subcellular location is the chloroplast thylakoid membrane. It catalyses the reaction a plastoquinone + NADH + (n+1) H(+)(in) = a plastoquinol + NAD(+) + n H(+)(out). The enzyme catalyses a plastoquinone + NADPH + (n+1) H(+)(in) = a plastoquinol + NADP(+) + n H(+)(out). Functionally, NDH shuttles electrons from NAD(P)H:plastoquinone, via FMN and iron-sulfur (Fe-S) centers, to quinones in the photosynthetic chain and possibly in a chloroplast respiratory chain. The immediate electron acceptor for the enzyme in this species is believed to be plastoquinone. Couples the redox reaction to proton translocation, and thus conserves the redox energy in a proton gradient. This Pelargonium hortorum (Common geranium) protein is NAD(P)H-quinone oxidoreductase subunit J, chloroplastic.